The primary structure comprises 158 residues: MAEQLNSLEELGTVAKTEAAAPVHVQKLDAQGRAYATGKRKDAVARVWVKPGTGKITVNDKEFEKYFARPVLQMILQQPIVASNRAGQFDIVATVAGGGLSGQAGAVRHGISKALTYYEPGLRTVLKKGGFLTRDSRVVERKKYGKAKARRSFQFSKR.

Belongs to the universal ribosomal protein uS9 family.

This chain is Small ribosomal subunit protein uS9, found in Brucella anthropi (strain ATCC 49188 / DSM 6882 / CCUG 24695 / JCM 21032 / LMG 3331 / NBRC 15819 / NCTC 12168 / Alc 37) (Ochrobactrum anthropi).